Reading from the N-terminus, the 579-residue chain is Isocitrate dehydrogenase kinase/phosphatase (579 aa).

ATP contacts are provided by residues 324 to 330 and lysine 345; that span reads ADGTPGM. Aspartate 380 is an active-site residue.

Belongs to the AceK family.

Its subcellular location is the cytoplasm. The enzyme catalyses L-seryl-[isocitrate dehydrogenase] + ATP = O-phospho-L-seryl-[isocitrate dehydrogenase] + ADP + H(+). In terms of biological role, bifunctional enzyme which can phosphorylate or dephosphorylate isocitrate dehydrogenase (IDH) on a specific serine residue. This is a regulatory mechanism which enables bacteria to bypass the Krebs cycle via the glyoxylate shunt in response to the source of carbon. When bacteria are grown on glucose, IDH is fully active and unphosphorylated, but when grown on acetate or ethanol, the activity of IDH declines drastically concomitant with its phosphorylation. This is Isocitrate dehydrogenase kinase/phosphatase from Xanthomonas campestris pv. campestris (strain 8004).